The following is a 780-amino-acid chain: Tyrosine-protein phosphatase non-receptor type 12 (780 aa).

M1 carries the post-translational modification N-acetylmethionine. S19 is modified (phosphoserine). The 266-residue stretch at 28 to 293 (FARDFMRLRR…ELVHRAIAQL (266 aa)) folds into the Tyrosine-protein phosphatase domain. Residues R36, 63 to 67 (RYKDI), D199, 231 to 237 (CSAGCGR), and Q278 contribute to the substrate site. Catalysis depends on C231, which acts as the Phosphocysteine intermediate. A phosphoserine mark is found at S332, S435, S449, and S468. Residues 345–438 (VEGDAKEEIL…KLERNLSFEI (94 aa)) are interaction with TGFB1I1. A compositionally biased stretch (polar residues) spans 502 to 519 (QSNKVSVTPPEESQNSDT). Disordered regions lie at residues 502–639 (QSNK…STES), 657–725 (GTTH…EKCD), and 744–780 (SDKREQISENPTEATDIGFGNRCGKPKGPRDPPSEWT). A phosphothreonine mark is found at T509 and T519. Basic and acidic residues predominate over residues 521–533 (PRPDRLPLDEKGH). 2 stretches are compositionally biased toward polar residues: residues 552–577 (EGNSSDINYQTRKTVSLTPSPTTQVE) and 587–601 (TSPLFRTPLSFTNPL). S567 is modified (phosphoserine). T569 carries the post-translational modification Phosphothreonine. Phosphoserine occurs at positions 571 and 596. Position 598 is a phosphothreonine (T598). The span at 602–613 (HSDDSDSDERNS) shows a compositional bias: basic and acidic residues. S603, S606, S608, and S613 each carry phosphoserine. Positions 622–639 (TNISTASATVSAATSTES) are enriched in low complexity. S673 and S689 each carry phosphoserine. Polar residues predominate over residues 690-703 (EHNTPVRSEWSELQ). T693 carries the post-translational modification Phosphothreonine. Composition is skewed to basic and acidic residues over residues 704–725 (SQERSEQKKSEGLITSENEKCD) and 771–780 (GPRDPPSEWT).

This sequence belongs to the protein-tyrosine phosphatase family. Non-receptor class 4 subfamily. As to quaternary structure, interacts with TGFB1I1. Interacts with PSTPIP1. Interacts with PTK2B/PYK2. Interacts with LPXN. Interacts with SORBS2; this interaction greatly enhances WASF1 dephosphorylation and might mediate partial translocation to focal adhesion sites. Post-translationally, phosphorylated by STK24/MST3 and this results in inhibition of its activity.

The protein localises to the cytoplasm. It localises to the cell junction. The protein resides in the focal adhesion. Its subcellular location is the cell projection. It is found in the podosome. It carries out the reaction O-phospho-L-tyrosyl-[protein] + H2O = L-tyrosyl-[protein] + phosphate. Dephosphorylates a range of proteins, and thereby regulates cellular signaling cascades. Dephosphorylates cellular tyrosine kinases, such as ERBB2 and PTK2B/PYK2, and thereby regulates signaling via ERBB2 and PTK2B/PYK2. Selectively dephosphorylates ERBB2 phosphorylated at 'Tyr-1112', 'Tyr-1196', and/or 'Tyr-1248'. This chain is Tyrosine-protein phosphatase non-receptor type 12 (PTPN12), found in Homo sapiens (Human).